Consider the following 447-residue polypeptide: MTITASNTLEFKWTSPRSSRSSFRTTTDAEQKISIDMSNTYCDQVLGPLYSYMMVLGLNHTHSSARNTMFKWPLTIYNYLTLAILTAATIRRISQIKQKSATNEEKDAAFHVLNPTFVLTLCHALLMFSGLAAGFLLLKLQKQREKMYHVLDQGLGRNRNEEHDSHHFKLNKLFISISFSFAAALSFVQIATKMRYLDLPDTPDLINRKIYFVILEGYVIFIASSCISLVAILFFQLCRILQFSIGQLIEEMVPKEKEECPLPEQSLQQIHDVQIHYQEISNAKLYIEQNFSFSLFYTYGCCIPLTCLLGYIAFRNGIQADMAETFSVAIWLTNTMLALMLFSIPAFMIAEEGDKLLTASFKMYHETLCEERDLLVLSQMSFLSFQMHATKLTLTAGNFFMMNRKIMISLFSAIFTYFLILVQFDAEKERAGECNNQSRVLIVQPPV.

Topologically, residues 1–69 (MTITASNTLE…HTHSSARNTM (69 aa)) are extracellular. A helical membrane pass occupies residues 70 to 90 (FKWPLTIYNYLTLAILTAATI). At 91 to 116 (RRISQIKQKSATNEEKDAAFHVLNPT) the chain is on the cytoplasmic side. Residues 117-137 (FVLTLCHALLMFSGLAAGFLL) traverse the membrane as a helical segment. At 138–171 (LKLQKQREKMYHVLDQGLGRNRNEEHDSHHFKLN) the chain is on the extracellular side. Residues 172-192 (KLFISISFSFAAALSFVQIAT) traverse the membrane as a helical segment. The Cytoplasmic portion of the chain corresponds to 193–211 (KMRYLDLPDTPDLINRKIY). Residues 212–232 (FVILEGYVIFIASSCISLVAI) form a helical membrane-spanning segment. Over 233 to 292 (LFFQLCRILQFSIGQLIEEMVPKEKEECPLPEQSLQQIHDVQIHYQEISNAKLYIEQNFS) the chain is Extracellular. Residues 293–313 (FSLFYTYGCCIPLTCLLGYIA) form a helical membrane-spanning segment. Residues 314 to 328 (FRNGIQADMAETFSV) are Cytoplasmic-facing. The chain crosses the membrane as a helical span at residues 329–349 (AIWLTNTMLALMLFSIPAFMI). The Extracellular portion of the chain corresponds to 350 to 405 (AEEGDKLLTASFKMYHETLCEERDLLVLSQMSFLSFQMHATKLTLTAGNFFMMNRK). The helical transmembrane segment at 406 to 426 (IMISLFSAIFTYFLILVQFDA) threads the bilayer. At 427–447 (EKERAGECNNQSRVLIVQPPV) the chain is on the cytoplasmic side.

This sequence belongs to the insect chemoreceptor superfamily. Gustatory receptor (GR) family. As to expression, expressed in I2 pharyngeal neurons.

The protein resides in the membrane. Its function is as follows. Chemoreceptor involved in light-induced avoidance behavior. Probably acts as a molecular sensor in I2 pharyngeal neurons, required for the inhibition of feeding in response to light and hydrogen peroxide. Involved in circadian rhythms, probably by acting as a light sensor. In contrast to lite-1, does not act as a photoreceptor. The chain is Gustatory receptor family protein 3 from Caenorhabditis elegans.